Reading from the N-terminus, the 153-residue chain is Ribonuclease H (153 aa).

An RNase H type-1 domain is found at 1-141 (MKLVEIFTDG…CDELAKAGAN (141 aa)). Positions 9, 47, 69, and 133 each coordinate Mg(2+).

This sequence belongs to the RNase H family. In terms of assembly, monomer. Mg(2+) serves as cofactor.

Its subcellular location is the cytoplasm. It carries out the reaction Endonucleolytic cleavage to 5'-phosphomonoester.. Endonuclease that specifically degrades the RNA of RNA-DNA hybrids. This Actinobacillus pleuropneumoniae serotype 5b (strain L20) protein is Ribonuclease H.